The following is a 355-amino-acid chain: Ataxin-3 (355 aa).

A Peptide (Met-Gly) (interchain with G-Cter in ubiquitin) cross-link involves residue Met1. The Josephin domain maps to 1–180 (MESIFHEKQE…DCEADQLLQM (180 aa)). Residue Cys14 is the Nucleophile of the active site. His119 functions as the Proton acceptor in the catalytic mechanism. The active site involves Asn134. Lys200 participates in a covalent cross-link: Glycyl lysine isopeptide (Lys-Gly) (interchain with G-Cter in ubiquitin). A Phosphoserine modification is found at Ser219. 2 consecutive UIM domains span residues 224-243 (EDED…IDME) and 244-263 (DEEA…SSRS). Polar residues predominate over residues 257–275 (MQGSSRSMCENSPQTSSPD). The tract at residues 257 to 355 (MQGSSRSMCE…KDNLKAERKK (99 aa)) is disordered. Phosphoserine is present on residues Ser268, Ser272, and Ser273. Over residues 279 to 289 (EELRRRREAYF) the composition is skewed to basic and acidic residues. Ser321 is modified (phosphoserine). The UIM 3 domain occupies 329-348 (SEEDMLRAAVTMSLETAKDN). Basic and acidic residues predominate over residues 344-355 (TAKDNLKAERKK).

In terms of assembly, interacts with STUB1/CHIP (when monoubiquitinated). Interacts with DNA repair proteins RAD23A and RAD23B. Interacts with BECN1 (via its poly-Gln domain). Interacts with PRKN, UBR2, VCP and tubulin. In terms of processing, monoubiquitinated by UBE2W, possibly leading to activate the deubiquitinating enzyme activity.

The protein resides in the nucleus matrix. It localises to the nucleus. Its subcellular location is the lysosome membrane. The enzyme catalyses Thiol-dependent hydrolysis of ester, thioester, amide, peptide and isopeptide bonds formed by the C-terminal Gly of ubiquitin (a 76-residue protein attached to proteins as an intracellular targeting signal).. Deubiquitinating enzyme involved in protein homeostasis maintenance, transcription, cytoskeleton regulation, myogenesis and degradation of misfolded chaperone substrates. Binds long polyubiquitin chains and trims them, while it has weak or no activity against chains of 4 or less ubiquitins. Involved in degradation of misfolded chaperone substrates via its interaction with STUB1/CHIP: recruited to monoubiquitinated STUB1/CHIP, and restricts the length of ubiquitin chain attached to STUB1/CHIP substrates and preventing further chain extension. Interacts with key regulators of transcription and represses transcription: acts as a histone-binding protein that regulates transcription. Acts as a negative regulator of mTORC1 signaling in response to amino acid deprivation by mediating deubiquitination of RHEB, thereby promoting RHEB inactivation by the TSC-TBC complex. Regulates autophagy via the deubiquitination of 'Lys-402' of BECN1 leading to the stabilization of BECN1. This chain is Ataxin-3 (Atxn3), found in Mus musculus (Mouse).